The sequence spans 347 residues: Tetraacyldisaccharide 4'-kinase (347 aa).

Position 65–72 (65–72 (FVGGTGKT)) interacts with ATP.

The protein belongs to the LpxK family.

The catalysed reaction is a lipid A disaccharide + ATP = a lipid IVA + ADP + H(+). It functions in the pathway glycolipid biosynthesis; lipid IV(A) biosynthesis; lipid IV(A) from (3R)-3-hydroxytetradecanoyl-[acyl-carrier-protein] and UDP-N-acetyl-alpha-D-glucosamine: step 6/6. Its function is as follows. Transfers the gamma-phosphate of ATP to the 4'-position of a tetraacyldisaccharide 1-phosphate intermediate (termed DS-1-P) to form tetraacyldisaccharide 1,4'-bis-phosphate (lipid IVA). This chain is Tetraacyldisaccharide 4'-kinase, found in Janthinobacterium sp. (strain Marseille) (Minibacterium massiliensis).